We begin with the raw amino-acid sequence, 213 residues long: Holliday junction resolvase RecU (213 aa).

Mg(2+) contacts are provided by Thr99, Asp101, Glu114, and Gln133.

It belongs to the RecU family. It depends on Mg(2+) as a cofactor.

It localises to the cytoplasm. The catalysed reaction is Endonucleolytic cleavage at a junction such as a reciprocal single-stranded crossover between two homologous DNA duplexes (Holliday junction).. In terms of biological role, endonuclease that resolves Holliday junction intermediates in genetic recombination. Cleaves mobile four-strand junctions by introducing symmetrical nicks in paired strands. Promotes annealing of linear ssDNA with homologous dsDNA. Required for DNA repair, homologous recombination and chromosome segregation. In Lactococcus lactis subsp. cremoris (strain MG1363), this protein is Holliday junction resolvase RecU.